Consider the following 1390-residue polypeptide: Nuclear pore complex protein 14 (1390 aa).

Composition is skewed to polar residues over residues 434–455 (SQKP…STVF) and 464–521 (LKSS…STPK). Disordered stretches follow at residues 434 to 530 (SQKP…KISD), 851 to 874 (PSSS…TQAD), and 985 to 1118 (QEIE…SKAA). Residues 851–864 (PSSSLFSASPSTPS) show a composition bias toward low complexity. The segment covering 986 to 1033 (EIEKASSKVETLNKTEEVKDEKSENEVTPDLKSEEPKSLETKVKEEPK) has biased composition (basic and acidic residues). Over residues 1051 to 1071 (KTPSFSFNSTTTPKSTSSTSS) the composition is skewed to low complexity. The stretch at 1073 to 1074 (FG) is repeat 1. The interval 1073-1373 (FGGGLKTQTP…TPAPTSSVFG (301 aa)) is 17 X 2 AA repeats of F-G. Polar residues predominate over residues 1078–1090 (KTQTPSSSNSTNI). Copy 2 of the repeat occupies 1091-1092 (FG). Low complexity predominate over residues 1095–1109 (TTTTATPTPASNTSS). 6 tandem repeats follow at residues 1111–1112 (FG), 1122–1123 (FG), 1125–1126 (FG), 1163–1164 (FG), 1166–1167 (FG), and 1178–1179 (FG). Residues 1183–1280 (TAPTVPNVDD…QASAPATGTS (98 aa)) form a disordered region. Residues 1201–1210 (NGGGSGGFMS) show a composition bias toward gly residues. Positions 1231-1243 (TSTGTSASSSSWL) are enriched in low complexity. Repeat unit 9 spans residues 1244-1245 (FG). The segment covering 1264–1280 (TAGSSAQQASAPATGTS) has biased composition (low complexity). 8 repeat units span residues 1283 to 1284 (FG), 1289 to 1290 (FG), 1295 to 1296 (FG), 1300 to 1301 (FG), 1315 to 1316 (FG), 1344 to 1345 (FG), 1357 to 1358 (FG), and 1372 to 1373 (FG). Residues 1342–1371 (SLFGGGATPQTNTSIFGGGANTTPAPTSSV) are compositionally biased toward polar residues. Positions 1342 to 1390 (SLFGGGATPQTNTSIFGGGANTTPAPTSSVFGGGASANANKPTSFTSWR) are disordered. The span at 1378-1390 (ANANKPTSFTSWR) shows a compositional bias: polar residues.

Interacts with caspase ced-3 (via propeptide); the interaction tethers ced-3 to the nuclear membrane and prevents its autoprocessing in absence of ced-4.

The protein localises to the nucleus. It localises to the nuclear pore complex. The protein resides in the nucleus membrane. Its function is as follows. May serve as a docking site in the receptor-mediated import of substrates across the nuclear pore complex. Plays a role in apoptosis by tethering caspase ced-3 to the nuclear membrane preventing its autoprocessing in absence of ced-4. The chain is Nuclear pore complex protein 14 from Caenorhabditis elegans.